The sequence spans 493 residues: 3-octaprenyl-4-hydroxybenzoate carboxy-lyase (493 aa).

Asn172 contributes to the Mn(2+) binding site. Residues 175–177 (IYR), 189–191 (RWL), and 194–195 (RG) contribute to the prenylated FMN site. Residue Glu238 coordinates Mn(2+). Asp287 serves as the catalytic Proton donor.

This sequence belongs to the UbiD family. In terms of assembly, homohexamer. It depends on prenylated FMN as a cofactor. Mn(2+) is required as a cofactor.

The protein resides in the cell membrane. The catalysed reaction is a 4-hydroxy-3-(all-trans-polyprenyl)benzoate + H(+) = a 2-(all-trans-polyprenyl)phenol + CO2. It participates in cofactor biosynthesis; ubiquinone biosynthesis. Its function is as follows. Catalyzes the decarboxylation of 3-octaprenyl-4-hydroxy benzoate to 2-octaprenylphenol, an intermediate step in ubiquinone biosynthesis. The protein is 3-octaprenyl-4-hydroxybenzoate carboxy-lyase of Shewanella sediminis (strain HAW-EB3).